The sequence spans 768 residues: DNA replication licensing factor MCM3 homolog 2 (768 aa).

An MCM domain is found at 290 to 497; sequence TFDLLGNSLA…IDRQISEHVA (208 aa). Residue 340 to 347 coordinates ATP; that stretch reads GDPSVAKS. The Arginine finger motif lies at 472–475; sequence SRFD. Residues 661–670 are compositionally biased toward basic and acidic residues; it reads EMKQQADHDA. Residues 661–689 are disordered; the sequence is EMKQQADHDAGATGGTVDGHGSSGNDPMD. Gly residues predominate over residues 672-682; the sequence is ATGGTVDGHGS.

The protein belongs to the MCM family.

It localises to the nucleus. It carries out the reaction ATP + H2O = ADP + phosphate + H(+). Acts as a factor that allows the DNA to undergo a single round of replication per cell cycle. Required for DNA replication and cell proliferation. May act as a component of the MCM complex which is the putative replicative helicase of the replication licensing system in eukaryotic cells. The polypeptide is DNA replication licensing factor MCM3 homolog 2 (ROA2) (Zea mays (Maize)).